The chain runs to 45 residues: DNA-directed RNA polymerase subunit Rpo12 (45 aa).

Zn(2+)-binding residues include Cys-8, Cys-23, and Cys-26.

Belongs to the archaeal Rpo12/eukaryotic RPC10 RNA polymerase subunit family. Part of the RNA polymerase complex. Zn(2+) serves as cofactor.

It is found in the cytoplasm. The catalysed reaction is RNA(n) + a ribonucleoside 5'-triphosphate = RNA(n+1) + diphosphate. In terms of biological role, DNA-dependent RNA polymerase (RNAP) catalyzes the transcription of DNA into RNA using the four ribonucleoside triphosphates as substrates. The sequence is that of DNA-directed RNA polymerase subunit Rpo12 from Methanosarcina acetivorans (strain ATCC 35395 / DSM 2834 / JCM 12185 / C2A).